A 604-amino-acid chain; its full sequence is Aspartate--tRNA(Asp/Asn) ligase (604 aa).

L-aspartate is bound at residue glutamate 174. An aspartate region spans residues 198–201; the sequence is QLYK. An L-aspartate-binding site is contributed by arginine 220. Residues 220-222 and glutamine 229 each bind ATP; that span reads RDE. Histidine 460 serves as a coordination point for L-aspartate. Glutamate 494 provides a ligand contact to ATP. Arginine 501 is a binding site for L-aspartate. 546–549 contacts ATP; it reads GLDR.

It belongs to the class-II aminoacyl-tRNA synthetase family. Type 1 subfamily. Homodimer.

The protein resides in the cytoplasm. The catalysed reaction is tRNA(Asx) + L-aspartate + ATP = L-aspartyl-tRNA(Asx) + AMP + diphosphate. Aspartyl-tRNA synthetase with relaxed tRNA specificity since it is able to aspartylate not only its cognate tRNA(Asp) but also tRNA(Asn). Reaction proceeds in two steps: L-aspartate is first activated by ATP to form Asp-AMP and then transferred to the acceptor end of tRNA(Asp/Asn). The sequence is that of Aspartate--tRNA(Asp/Asn) ligase from Paracidovorax citrulli (strain AAC00-1) (Acidovorax citrulli).